The primary structure comprises 423 residues: Zinc finger protein Gfi-1 (423 aa).

The tract at residues 1-20 is SNAG domain; it reads MPRSFLVKSKKAHSYHQPRS. Residues 1–76 form a disordered region; that stretch reads MPRSFLVKSK…DRASASPNSC (76 aa). 2 positions are modified to phosphoserine: Ser-20 and Ser-57. A compositionally biased stretch (basic and acidic residues) spans 48–57; sequence SKMEPRERLS. The tract at residues 141 to 258 is required for interaction with RELA; sequence RQCSALERSA…LLLGGGSYKC (118 aa). 6 C2H2-type zinc fingers span residues 256–279, 285–307, 313–335, 341–363, 369–391, and 397–420; these read YKCI…RRSH, FACE…KAVH, FDCK…LLIH, YPCQ…TFIH, HKCQ…SRKH, and FGCD…ETQH.

Interacts (via the zinc-finger domain) with ARIH2; the interaction prevents GFI1 ubiquitination and proteasomal degradation. Forms a complex with EHMT2 and HDAC1 to promote 'Lys-9' dimethylation of H3 (H3K9Me2) and repress expression of target genes. Interacts directly with EHMT2. Interacts with RUNX1T1; the interaction represses HDAC-mediated transcriptional activity. Interacts (via the C-terminal zinc fingers) with ZBTB17; the interaction results in the recruitment of GFI1 to the CDKN1A/p21 and CDKNIB promoters and repression of transcription. Interacts with U2AF1L4. Component of RCOR-GFI-KDM1A-HDAC complexes. Interacts directly with RCOR1, KDM1A and HDAC2. Also interacts with HDAC1. Component of the GFI1-AJUBA-HDAC1 repressor complex. Interacts directly with AJUBA (via its LIM domains); the interaction results in the HDAC-dependent corepression of a subset of GFI1 target genes and, occurs independently of the SNAG domain. Interacts with SPI1; the interaction inhibits SPI1 transcriptional activity targeted at macrophage-specific genes, repressing macrophage differentiation of myeloid progenitor cells and promoting granulocyte commitment. Interacts with PIAS3; the interaction relieves the inhibitory effect of PIAS3 on STAT3-mediated transcriptional activity. Interacts with RELA; the interaction occurs on liposaccharide (LPS) stimulation and controls RELA DNA binding activity and regulates endotoxin-mediated TOLL-like receptor inflammatory response. Post-translationally, ubiquitinated.

The protein localises to the nucleus. Its function is as follows. Transcription repressor essential for hematopoiesis. Functions in a cell-context and development-specific manner. Binds to 5'-TAAATCAC[AT]GCA-3' in the promoter region of a large number of genes. Component of several complexes, including the EHMT2-GFI1-HDAC1, AJUBA-GFI1-HDAC1 and RCOR-GFI-KDM1A-HDAC complexes, that suppress, via histone deacetylase (HDAC) recruitment, a number of genes implicated in multilineage blood cell development. Regulates neutrophil differentiation, promotes proliferation of lymphoid cells, and is required for granulocyte development. Inhibits SPI1 transcriptional activity at macrophage-specific genes, repressing macrophage differentiation of myeloid progenitor cells and promoting granulocyte commitment. Mediates, together with U2AF1L4, the alternative splicing of CD45 and controls T-cell receptor signaling. Regulates the endotoxin-mediated Toll-like receptor (TLR) inflammatory response by antagonizing RELA. Cooperates with CBFA2T2 to regulate ITGB1-dependent neurite growth. Controls cell-cycle progression by repressing CDKNIA/p21 transcription in response to TGFB1 via recruitment of GFI1 by ZBTB17 to the CDKNIA/p21 and CDKNIB promoters. Required for the maintenance of inner ear hair cells. In addition to its role in transcription, acts as a substrate adapter for PRMT1 in the DNA damage response. Facilitates the recognition of TP53BP1 and MRE11 substrates by PRMT1, promoting their methylation and the DNA damage response. The protein is Zinc finger protein Gfi-1 (Gfi1) of Mus musculus (Mouse).